We begin with the raw amino-acid sequence, 139 residues long: 3-hydroxyacyl-[acyl-carrier-protein] dehydratase FabZ (139 aa).

Residue His-47 is part of the active site.

It belongs to the thioester dehydratase family. FabZ subfamily.

It localises to the cytoplasm. The enzyme catalyses a (3R)-hydroxyacyl-[ACP] = a (2E)-enoyl-[ACP] + H2O. In terms of biological role, involved in unsaturated fatty acids biosynthesis. Catalyzes the dehydration of short chain beta-hydroxyacyl-ACPs and long chain saturated and unsaturated beta-hydroxyacyl-ACPs. In Oenococcus oeni (strain ATCC BAA-331 / PSU-1), this protein is 3-hydroxyacyl-[acyl-carrier-protein] dehydratase FabZ.